The chain runs to 95 residues: Aspartyl/glutamyl-tRNA(Asn/Gln) amidotransferase subunit C (95 aa).

Belongs to the GatC family. As to quaternary structure, heterotrimer of A, B and C subunits.

The enzyme catalyses L-glutamyl-tRNA(Gln) + L-glutamine + ATP + H2O = L-glutaminyl-tRNA(Gln) + L-glutamate + ADP + phosphate + H(+). The catalysed reaction is L-aspartyl-tRNA(Asn) + L-glutamine + ATP + H2O = L-asparaginyl-tRNA(Asn) + L-glutamate + ADP + phosphate + 2 H(+). Its function is as follows. Allows the formation of correctly charged Asn-tRNA(Asn) or Gln-tRNA(Gln) through the transamidation of misacylated Asp-tRNA(Asn) or Glu-tRNA(Gln) in organisms which lack either or both of asparaginyl-tRNA or glutaminyl-tRNA synthetases. The reaction takes place in the presence of glutamine and ATP through an activated phospho-Asp-tRNA(Asn) or phospho-Glu-tRNA(Gln). The protein is Aspartyl/glutamyl-tRNA(Asn/Gln) amidotransferase subunit C of Pelodictyon phaeoclathratiforme (strain DSM 5477 / BU-1).